The following is a 753-amino-acid chain: 5-methyltetrahydropteroyltriglutamate--homocysteine methyltransferase (753 aa).

5-methyltetrahydropteroyltri-L-glutamate is bound by residues 17 to 20 (RELK) and Lys117. L-homocysteine-binding positions include 431–433 (IGS) and Glu484. L-methionine contacts are provided by residues 431–433 (IGS) and Glu484. 5-methyltetrahydropteroyltri-L-glutamate-binding positions include 515-516 (RC) and Trp561. Asp599 provides a ligand contact to L-homocysteine. Asp599 contributes to the L-methionine binding site. Glu605 contacts 5-methyltetrahydropteroyltri-L-glutamate. The Zn(2+) site is built by His641, Cys643, and Glu665. Residue His694 is the Proton donor of the active site. Cys726 serves as a coordination point for Zn(2+).

It belongs to the vitamin-B12 independent methionine synthase family. Zn(2+) serves as cofactor.

The catalysed reaction is 5-methyltetrahydropteroyltri-L-glutamate + L-homocysteine = tetrahydropteroyltri-L-glutamate + L-methionine. The protein operates within amino-acid biosynthesis; L-methionine biosynthesis via de novo pathway; L-methionine from L-homocysteine (MetE route): step 1/1. In terms of biological role, catalyzes the transfer of a methyl group from 5-methyltetrahydrofolate to homocysteine resulting in methionine formation. The sequence is that of 5-methyltetrahydropteroyltriglutamate--homocysteine methyltransferase from Cronobacter sakazakii (strain ATCC BAA-894) (Enterobacter sakazakii).